The following is a 271-amino-acid chain: Type III pantothenate kinase (271 aa).

6–13 provides a ligand contact to ATP; that stretch reads DVRNTHTV. A substrate-binding site is contributed by 109–112; that stretch reads GADR. Aspartate 111 functions as the Proton acceptor in the catalytic mechanism. A K(+)-binding site is contributed by aspartate 131. Serine 134 contributes to the ATP binding site. Threonine 186 serves as a coordination point for substrate.

Belongs to the type III pantothenate kinase family. Homodimer. NH4(+) is required as a cofactor. It depends on K(+) as a cofactor.

It is found in the cytoplasm. The enzyme catalyses (R)-pantothenate + ATP = (R)-4'-phosphopantothenate + ADP + H(+). It functions in the pathway cofactor biosynthesis; coenzyme A biosynthesis; CoA from (R)-pantothenate: step 1/5. Catalyzes the phosphorylation of pantothenate (Pan), the first step in CoA biosynthesis. The polypeptide is Type III pantothenate kinase (Mycobacteroides abscessus (strain ATCC 19977 / DSM 44196 / CCUG 20993 / CIP 104536 / JCM 13569 / NCTC 13031 / TMC 1543 / L948) (Mycobacterium abscessus)).